We begin with the raw amino-acid sequence, 207 residues long: Vascular endothelial growth factor B (207 aa).

A signal peptide spans 1–21 (MSPLLRRLLLVALLQLACTQA). Intrachain disulfides connect Cys78/Cys122 and Cys82/Cys124. Residues 140–182 (IPHHRPQPRSVLSWDSAPGASSPADIIHPTPAPGPSAHAAPSA) form a disordered region.

Belongs to the PDGF/VEGF growth factor family. Homodimer; disulfide-linked. Can also form heterodimer with VEGF.

The protein localises to the secreted. Growth factor for endothelial cells. VEGF-B167 binds heparin and neuropilin-1 whereas the binding to neuropilin-1 of VEGF-B186 is regulated by proteolysis. The polypeptide is Vascular endothelial growth factor B (Vegfb) (Rattus norvegicus (Rat)).